We begin with the raw amino-acid sequence, 652 residues long: DNA ligase (652 aa).

Residues 29–33 (DSEYD), 78–79 (SL), and Glu107 each bind NAD(+). The active-site N6-AMP-lysine intermediate is the Lys109. NAD(+) is bound by residues Arg130, Glu164, Lys278, and Lys302. Positions 395, 398, 413, and 418 each coordinate Zn(2+). Residues 577-652 (VADAALSGLT…VRDEAWLESL (76 aa)) enclose the BRCT domain.

This sequence belongs to the NAD-dependent DNA ligase family. LigA subfamily. The cofactor is Mg(2+). Requires Mn(2+) as cofactor.

It carries out the reaction NAD(+) + (deoxyribonucleotide)n-3'-hydroxyl + 5'-phospho-(deoxyribonucleotide)m = (deoxyribonucleotide)n+m + AMP + beta-nicotinamide D-nucleotide.. Its function is as follows. DNA ligase that catalyzes the formation of phosphodiester linkages between 5'-phosphoryl and 3'-hydroxyl groups in double-stranded DNA using NAD as a coenzyme and as the energy source for the reaction. It is essential for DNA replication and repair of damaged DNA. The sequence is that of DNA ligase from Streptococcus pneumoniae serotype 2 (strain D39 / NCTC 7466).